The chain runs to 148 residues: ASCH domain-containing ribonuclease (148 aa).

Positions 13 to 70 constitute an ASCH domain; the sequence is SLWPEFAKAIVSGKKTVEFRRRIPLPALSARIWIYATRPVKSVIGFAYLEAIVQGDVN.

Requires Mn(2+) as cofactor. It depends on Ni(2+) as a cofactor.

Shows sequence-specific endoribonuclease activity towards single-stranded RNA (ssRNA), with a preference for the bond between pyrimidine and adenine nucleotides. May also have 5'-exonuclease activity. In Zymomonas mobilis subsp. mobilis (strain ATCC 10988 / DSM 424 / LMG 404 / NCIMB 8938 / NRRL B-806 / ZM1), this protein is ASCH domain-containing ribonuclease.